A 356-amino-acid chain; its full sequence is MQTLHALLRDIPAPDAEAMARAQQHIDGLLKPPGSLGRLETLAVQLAGMPGLNGTPQVGEKAVLVMCADHGVWDEGVAVSPKIVTAIQAANMTQGTTGVCVLAAQAGAKVHVIDVGIDAEPIPGVVNMRVARGCGNIAVGPAMSRSQAEALLLEVSRYTCDLAQRGVTLFGVGELGMANTTPAAAMVSVFTGSDAKEVVGIGANLPPSRIDNKVDVVRRAIAINQPNPRDGIDVLSKVGGFDLVGMTGVMLGAARCGLPVLLDGFLSYSAALAACQIAPAVRPYLIPSHFSAEKGARIALAHLSMEPYLHMAMRLGEGSGAALAMPIVEAACAMFHNMGELAASNIVLPEGNANAT.

Glutamate 317 acts as the Proton acceptor in catalysis.

This sequence belongs to the CobT family. Homodimer.

The catalysed reaction is 5,6-dimethylbenzimidazole + nicotinate beta-D-ribonucleotide = alpha-ribazole 5'-phosphate + nicotinate + H(+). The protein operates within nucleoside biosynthesis; alpha-ribazole biosynthesis; alpha-ribazole from 5,6-dimethylbenzimidazole: step 1/2. Its function is as follows. Catalyzes the synthesis of alpha-ribazole-5'-phosphate from nicotinate mononucleotide (NAMN) and 5,6-dimethylbenzimidazole (DMB). This chain is Nicotinate-nucleotide--dimethylbenzimidazole phosphoribosyltransferase, found in Salmonella paratyphi C (strain RKS4594).